We begin with the raw amino-acid sequence, 159 residues long: Neuroglobin (159 aa).

A Globin domain is found at 3 to 151 (KLSEKDKELI…VVAAMSQGWA (149 aa)). Heme b-binding residues include His-66 and His-98.

Belongs to the globin family. As to quaternary structure, monomer. Homodimers and homotetramers. Mainly monomeric but also detected as part of homodimers and homotetramers.

The protein resides in the cytoplasm. The protein localises to the cytosol. Its subcellular location is the mitochondrion matrix. The catalysed reaction is Fe(III)-heme b-[protein] + nitric oxide + H2O = Fe(II)-heme b-[protein] + nitrite + 2 H(+). Functionally, monomeric globin with a bis-histidyl six-coordinate heme-iron atom through which it can bind dioxygen, carbon monoxide and nitric oxide. Could help transport oxygen and increase its availability to the metabolically active neuronal tissues, though its low quantity in tissues as well as its high affinity for dioxygen, which may limit its oxygen-releasing ability, argue against it. The ferrous/deoxygenated form exhibits a nitrite reductase activity and it could produce nitric oxide which in turn inhibits cellular respiration in response to hypoxia. In its ferrous/deoxygenated state, it may also exhibit GDI (Guanine nucleotide Dissociation Inhibitor) activity toward heterotrimeric G-alpha proteins, thereby regulating signal transduction to facilitate neuroprotective responses in the wake of hypoxia and associated oxidative stress. This is Neuroglobin (ngb) from Chaenocephalus aceratus (Blackfin icefish).